A 513-amino-acid polypeptide reads, in one-letter code: Probable DNA ligase (513 aa).

Position 215 (glutamate 215) interacts with ATP. Catalysis depends on lysine 217, which acts as the N6-AMP-lysine intermediate. Residues arginine 222, arginine 237, glutamate 266, phenylalanine 306, arginine 378, and lysine 384 each coordinate ATP.

Belongs to the ATP-dependent DNA ligase family. It depends on Mg(2+) as a cofactor.

It carries out the reaction ATP + (deoxyribonucleotide)n-3'-hydroxyl + 5'-phospho-(deoxyribonucleotide)m = (deoxyribonucleotide)n+m + AMP + diphosphate.. Its function is as follows. DNA ligase that seals nicks in double-stranded DNA during DNA replication, DNA recombination and DNA repair. In Mycobacterium marinum (strain ATCC BAA-535 / M), this protein is Probable DNA ligase.